A 236-amino-acid polypeptide reads, in one-letter code: Small ribosomal subunit protein uS2c (236 aa).

Belongs to the universal ribosomal protein uS2 family.

The protein resides in the plastid. Its subcellular location is the chloroplast. This Lepidium virginicum (Virginia pepperweed) protein is Small ribosomal subunit protein uS2c (rps2).